The sequence spans 229 residues: MKFLANLKCNHTRASFAEYAKILDANLSADDDVSVFVPFTAFDAKEHKFKLGAQNFYPCVSGAFTGEIGKAQLDEFGISSVLIGHSERREILGESERLLRAKFDFAAKNGWQIIYCVGENLSVNEAGGTKEFLRTQLGNIDTGYANLIVAYEPIWAIGTGKSASAEQIAEILGFLRTLTLAPLLYGGSVNAANIGEIARIRECGGVLVGTASWDATNFLNLIASSRERI.

6–8 (NLK) is a binding site for substrate. The active-site Electrophile is the His85. The active-site Proton acceptor is the Glu152. Residues Gly158 and Ser188 each contribute to the substrate site.

This sequence belongs to the triosephosphate isomerase family. As to quaternary structure, homodimer.

The protein localises to the cytoplasm. It catalyses the reaction D-glyceraldehyde 3-phosphate = dihydroxyacetone phosphate. It functions in the pathway carbohydrate biosynthesis; gluconeogenesis. The protein operates within carbohydrate degradation; glycolysis; D-glyceraldehyde 3-phosphate from glycerone phosphate: step 1/1. Functionally, involved in the gluconeogenesis. Catalyzes stereospecifically the conversion of dihydroxyacetone phosphate (DHAP) to D-glyceraldehyde-3-phosphate (G3P). The protein is Triosephosphate isomerase of Campylobacter curvus (strain 525.92).